A 186-amino-acid polypeptide reads, in one-letter code: ADP-ribosylation factor-like protein 8 (186 aa).

The note=Mediates targeting to membranes intramembrane region spans 1-19; it reads MLALINRILEWFKSIFWKE. GTP contacts are provided by residues 29 to 35, 71 to 75, and 130 to 133; these read QFSGKTT, DIGGQ, and NKRD.

This sequence belongs to the small GTPase superfamily. Arf family. As to quaternary structure, interacts with tubulin. Interacts (in GTP-bound form) with Rilpl. Interacts with unc-104. In terms of tissue distribution, expressed throughout development, from embryo to adult stage, in different tissues such as larval motor neurons, salivary glands, testis and ovaries (at protein level).

The protein resides in the lysosome membrane. Its subcellular location is the synapse. The protein localises to the cell projection. It is found in the axon. It localises to the perikaryon. Its function is as follows. Required for normal functioning of the late endocytic pathway including lysosome motility and late endosome-lysosome fusion. Not required for the delivery of lysosomal membrane protein-containing vesicles to late endosomes. In larval motor neurons, mediates the anterograde axonal long-range transport of presynaptic lysosome-related vesicles required for presynaptic biogenesis and synaptic function. Acts downstream of Rab2 during presynaptic precursor vesicle biogenesis. Essential role in chromosome segregation. This is ADP-ribosylation factor-like protein 8 from Drosophila melanogaster (Fruit fly).